A 494-amino-acid polypeptide reads, in one-letter code: Gram-negative bacteria-binding protein 1 (494 aa).

Positions 1-19 (MPGLCIGILLLIGFGCTTA) are cleaved as a signal peptide. The 101-residue stretch at 20–120 (YKIPTPTVEL…QPLPVCNLGG (101 aa)) folds into the CBM39 domain. N-linked (GlcNAc...) asparagine glycans are attached at residues Asn56 and Asn81. Positions 126 to 160 (GCSPGDDDFTDDNQLSTEDSALEPTAPSVCEPSES) are disordered. In terms of domain architecture, GH16 spans 135–494 (TDDNQLSTED…DYVRVFATDN (360 aa)). Asn185 carries an N-linked (GlcNAc...) asparagine glycan.

The protein belongs to the insect beta-1,3-glucan binding protein family.

Its subcellular location is the cell membrane. Plays a key role in innate immunity by acting as a pattern recognition receptor for beta-1,3-glucan from fungi and lipopolysaccharide from Gram-negative bacteria. Upon recognition of invading microorganism-derived products, acts upstream of protease spz processing enzyme SPE to activate the Toll pathway and to induce the expression of antimicrobial peptides drosomycin, cecropin and attacin. The chain is Gram-negative bacteria-binding protein 1 from Drosophila melanogaster (Fruit fly).